Consider the following 85-residue polypeptide: Sec-independent protein translocase protein TatA (85 aa).

The chain crosses the membrane as a helical span at residues 1–21; that stretch reads MGSFSIWHWLIVLLIIMMVFG. Over residues 39–51 the composition is skewed to basic and acidic residues; it reads FKEGMREGSEDKP. Residues 39–85 form a disordered region; that stretch reads FKEGMREGSEDKPAGSQQGQQAAGQPPRELHDSTTIDVEARDKSKQG. Over residues 52–65 the composition is skewed to low complexity; it reads AGSQQGQQAAGQPP. Over residues 66 to 85 the composition is skewed to basic and acidic residues; that stretch reads RELHDSTTIDVEARDKSKQG.

Belongs to the TatA/E family. In terms of assembly, the Tat system comprises two distinct complexes: a TatABC complex, containing multiple copies of TatA, TatB and TatC subunits, and a separate TatA complex, containing only TatA subunits. Substrates initially bind to the TatABC complex, which probably triggers association of the separate TatA complex to form the active translocon.

It localises to the cell inner membrane. Its function is as follows. Part of the twin-arginine translocation (Tat) system that transports large folded proteins containing a characteristic twin-arginine motif in their signal peptide across membranes. TatA could form the protein-conducting channel of the Tat system. This Ralstonia nicotianae (strain ATCC BAA-1114 / GMI1000) (Ralstonia solanacearum) protein is Sec-independent protein translocase protein TatA.